Consider the following 117-residue polypeptide: Appetite-regulating hormone (117 aa).

Residues 1–23 (MPSPGTVCSLLLLGMLWLDLAMA) form the signal peptide. Residue S26 is the site of O-decanoyl serine; alternate attachment. S26 is lipidated: O-hexanoyl serine; alternate. A lipid anchor (O-octanoyl serine; alternate) is attached at S26. The interval 29–50 (SPEHQRVQQRKESKKPPAKLQP) is disordered. Positions 31-43 (EHQRVQQRKESKK) are enriched in basic and acidic residues. A propeptide spans 52 to 75 (ALAGWLRPEDGGQAEGAEDELEVR) (removed in mature form). L98 is subject to Leucine amide. Residues 99–117 (GKFLQDILWEEAKEAPADK) constitute a propeptide, removed in mature form.

The protein belongs to the motilin family. In terms of processing, O-octanoylated by GOAT/MBOAT4. O-octanoylation or O-decanoylation is essential for ghrelin activity. The O-decanoylated forms Ghrelin-27-C10 and Ghrelin-28-C10 differ in the length of the carbon backbone of the carboxylic acid bound to Ser-26. A small fraction of ghrelin, ghrelin-28-C10:1, may be modified with a singly unsaturated carboxylic acid. Also O-acetylated and O-butyrylated on Ser-26 to minor levels. Post-translationally, amidation of Leu-98 is essential for obestatin activity. As to expression, highest level in stomach. All forms are found in serum as well. Other tissues compensate for the loss of ghrelin synthesis in the stomach following gastrectomy.

Its subcellular location is the secreted. Functionally, ghrelin is the ligand for growth hormone secretagogue receptor type 1 (GHSR). Induces the release of growth hormone from the pituitary. Has an appetite-stimulating effect, induces adiposity and stimulates gastric acid secretion. Involved in growth regulation. Its function is as follows. May be the ligand for GPR39. May have an appetite-reducing effect resulting in decreased food intake. May reduce gastric emptying activity and jejunal motility. In Homo sapiens (Human), this protein is Appetite-regulating hormone (GHRL).